The following is a 540-amino-acid chain: GMP synthase [glutamine-hydrolyzing] (540 aa).

In terms of domain architecture, Glutamine amidotransferase type-1 spans 29–222; the sequence is KILIVDFGSQ…VRKVAGLTGD (194 aa). Cys106 serves as the catalytic Nucleophile. Catalysis depends on residues His196 and Glu198. Positions 223–415 constitute a GMPS ATP-PPase domain; that stretch reads WTMRAFREEA…LGLPDVFVGR (193 aa). 250-256 serves as a coordination point for ATP; sequence SGGVDSA.

Homodimer.

The catalysed reaction is XMP + L-glutamine + ATP + H2O = GMP + L-glutamate + AMP + diphosphate + 2 H(+). The protein operates within purine metabolism; GMP biosynthesis; GMP from XMP (L-Gln route): step 1/1. Its function is as follows. Catalyzes the synthesis of GMP from XMP. The polypeptide is GMP synthase [glutamine-hydrolyzing] (Rhodopseudomonas palustris (strain ATCC BAA-98 / CGA009)).